The following is a 204-amino-acid chain: Cytochrome c oxidase subunit 3 (204 aa).

Helical transmembrane passes span 12–32, 56–76, 101–121, 133–153, and 171–191; these read YGNLLLMLGFLLMIMTMIQWW, GMMLFIVSEICFFFAFFWAYF, FQIPLLNTAILLSSGVSVTWA, AIHSMTITITLGFYFTFLQMM, and FFVATGFHGLHVIIGSTFLFM.

This sequence belongs to the cytochrome c oxidase subunit 3 family. Component of the cytochrome c oxidase (complex IV, CIV), a multisubunit enzyme composed of a catalytic core of 3 subunits and several supernumerary subunits. The complex exists as a monomer or a dimer and forms supercomplexes (SCs) in the inner mitochondrial membrane with ubiquinol-cytochrome c oxidoreductase (cytochrome b-c1 complex, complex III, CIII).

It localises to the mitochondrion inner membrane. It carries out the reaction 4 Fe(II)-[cytochrome c] + O2 + 8 H(+)(in) = 4 Fe(III)-[cytochrome c] + 2 H2O + 4 H(+)(out). Functionally, component of the cytochrome c oxidase, the last enzyme in the mitochondrial electron transport chain which drives oxidative phosphorylation. The respiratory chain contains 3 multisubunit complexes succinate dehydrogenase (complex II, CII), ubiquinol-cytochrome c oxidoreductase (cytochrome b-c1 complex, complex III, CIII) and cytochrome c oxidase (complex IV, CIV), that cooperate to transfer electrons derived from NADH and succinate to molecular oxygen, creating an electrochemical gradient over the inner membrane that drives transmembrane transport and the ATP synthase. Cytochrome c oxidase is the component of the respiratory chain that catalyzes the reduction of oxygen to water. Electrons originating from reduced cytochrome c in the intermembrane space (IMS) are transferred via the dinuclear copper A center (CU(A)) of subunit 2 and heme A of subunit 1 to the active site in subunit 1, a binuclear center (BNC) formed by heme A3 and copper B (CU(B)). The BNC reduces molecular oxygen to 2 water molecules using 4 electrons from cytochrome c in the IMS and 4 protons from the mitochondrial matrix. The sequence is that of Cytochrome c oxidase subunit 3 (COIII) from Enteroctopus dofleini (North Pacific giant octopus).